A 143-amino-acid chain; its full sequence is Small ribosomal subunit protein eS12 (143 aa).

Residues lysine 85, lysine 95, and lysine 114 each participate in a glycyl lysine isopeptide (Lys-Gly) (interchain with G-Cter in ubiquitin) cross-link.

It belongs to the eukaryotic ribosomal protein eS12 family. Component of the small ribosomal subunit (SSU). Mature yeast ribosomes consist of a small (40S) and a large (60S) subunit. The 40S small subunit contains 1 molecule of ribosomal RNA (18S rRNA) and 33 different proteins (encoded by 57 genes). The large 60S subunit contains 3 rRNA molecules (25S, 5.8S and 5S rRNA) and 46 different proteins (encoded by 81 genes).

The protein localises to the cytoplasm. Its function is as follows. Component of the ribosome, a large ribonucleoprotein complex responsible for the synthesis of proteins in the cell. The small ribosomal subunit (SSU) binds messenger RNAs (mRNAs) and translates the encoded message by selecting cognate aminoacyl-transfer RNA (tRNA) molecules. The large subunit (LSU) contains the ribosomal catalytic site termed the peptidyl transferase center (PTC), which catalyzes the formation of peptide bonds, thereby polymerizing the amino acids delivered by tRNAs into a polypeptide chain. The nascent polypeptides leave the ribosome through a tunnel in the LSU and interact with protein factors that function in enzymatic processing, targeting, and the membrane insertion of nascent chains at the exit of the ribosomal tunnel. The polypeptide is Small ribosomal subunit protein eS12 (Saccharomyces cerevisiae (strain ATCC 204508 / S288c) (Baker's yeast)).